The primary structure comprises 71 residues: Exodeoxyribonuclease 7 small subunit (71 aa).

Belongs to the XseB family. In terms of assembly, heterooligomer composed of large and small subunits.

The protein resides in the cytoplasm. It catalyses the reaction Exonucleolytic cleavage in either 5'- to 3'- or 3'- to 5'-direction to yield nucleoside 5'-phosphates.. Bidirectionally degrades single-stranded DNA into large acid-insoluble oligonucleotides, which are then degraded further into small acid-soluble oligonucleotides. This chain is Exodeoxyribonuclease 7 small subunit, found in Streptococcus suis (strain 98HAH33).